A 204-amino-acid polypeptide reads, in one-letter code: FMN-dependent NADH:quinone oxidoreductase (204 aa).

FMN is bound by residues S10, S16–S18, and M96–F99.

Belongs to the azoreductase type 1 family. As to quaternary structure, homodimer. Requires FMN as cofactor.

It catalyses the reaction 2 a quinone + NADH + H(+) = 2 a 1,4-benzosemiquinone + NAD(+). The catalysed reaction is N,N-dimethyl-1,4-phenylenediamine + anthranilate + 2 NAD(+) = 2-(4-dimethylaminophenyl)diazenylbenzoate + 2 NADH + 2 H(+). Functionally, quinone reductase that provides resistance to thiol-specific stress caused by electrophilic quinones. In terms of biological role, also exhibits azoreductase activity. Catalyzes the reductive cleavage of the azo bond in aromatic azo compounds to the corresponding amines. The polypeptide is FMN-dependent NADH:quinone oxidoreductase (Herminiimonas arsenicoxydans).